The chain runs to 98 residues: Large ribosomal subunit protein uL23 (98 aa).

It belongs to the universal ribosomal protein uL23 family. Part of the 50S ribosomal subunit. Contacts protein L29, and trigger factor when it is bound to the ribosome.

One of the early assembly proteins it binds 23S rRNA. One of the proteins that surrounds the polypeptide exit tunnel on the outside of the ribosome. Forms the main docking site for trigger factor binding to the ribosome. The sequence is that of Large ribosomal subunit protein uL23 from Lactobacillus delbrueckii subsp. bulgaricus (strain ATCC 11842 / DSM 20081 / BCRC 10696 / JCM 1002 / NBRC 13953 / NCIMB 11778 / NCTC 12712 / WDCM 00102 / Lb 14).